A 339-amino-acid chain; its full sequence is DNA-directed RNA polymerase subunit alpha (339 aa).

An alpha N-terminal domain (alpha-NTD) region spans residues 1–233 (MVREKVRIST…DLFIPFLHAE (233 aa)). The interval 267–339 (IALKSIFIDQ…FTINLPKNKF (73 aa)) is alpha C-terminal domain (alpha-CTD).

The protein belongs to the RNA polymerase alpha chain family. As to quaternary structure, in plastids the minimal PEP RNA polymerase catalytic core is composed of four subunits: alpha, beta, beta', and beta''. When a (nuclear-encoded) sigma factor is associated with the core the holoenzyme is formed, which can initiate transcription.

It localises to the plastid. The protein resides in the chloroplast. It carries out the reaction RNA(n) + a ribonucleoside 5'-triphosphate = RNA(n+1) + diphosphate. Its function is as follows. DNA-dependent RNA polymerase catalyzes the transcription of DNA into RNA using the four ribonucleoside triphosphates as substrates. This chain is DNA-directed RNA polymerase subunit alpha, found in Populus alba (White poplar).